We begin with the raw amino-acid sequence, 56 residues long: Large ribosomal subunit protein bL32 (56 aa).

The interval 1–37 is disordered; sequence MAVQQNKKSRSRRDMRRSHDALTTAAVSVDKASGETH. Over residues 7–16 the composition is skewed to basic residues; that stretch reads KKSRSRRDMR.

Belongs to the bacterial ribosomal protein bL32 family.

The protein is Large ribosomal subunit protein bL32 of Haemophilus influenzae (strain PittEE).